Consider the following 420-residue polypeptide: MTSDDAAAGLVRVLDAAQGAFLALDSYGGNDRSRAVLAMAEALERSFAQILEANTLDLVVSREMSVADCLCEWLKLTPERLQNTVTILKRLASLPDPLQRVMASPYQFNLAQTYCQLMPLGVVALVYESFPELAAIAAGFCLKTGNSLVLRSCGASSHSTAAICEILREGLLDADLPVDSVSHIPSETSPNVQDLVGNASQLNLVIPYGRPSFVEQISQQCTPPVLKAAMGNCYLYWSSKGDLEMVRQMIIDSHVGHPDPVNAIEKVLVSPGQNPAPLVRLLNNLQAKGFKLRGDAELCEQFPDHLTLAKENEWGKAYLDRTVAFRTTQNLKTAIAWINSHSSGHGDCIATDSYQESRQFSMGVDSALVYVNIPPYFCRNPRHGESLFLGVSSQKGQRRGLIGLEAFMTPKQIVQGESRS.

This sequence belongs to the gamma-glutamyl phosphate reductase family.

Its subcellular location is the cytoplasm. The enzyme catalyses L-glutamate 5-semialdehyde + phosphate + NADP(+) = L-glutamyl 5-phosphate + NADPH + H(+). It participates in amino-acid biosynthesis; L-proline biosynthesis; L-glutamate 5-semialdehyde from L-glutamate: step 2/2. Its function is as follows. Catalyzes the NADPH-dependent reduction of L-glutamate 5-phosphate into L-glutamate 5-semialdehyde and phosphate. The product spontaneously undergoes cyclization to form 1-pyrroline-5-carboxylate. In Synechocystis sp. (strain ATCC 27184 / PCC 6803 / Kazusa), this protein is Gamma-glutamyl phosphate reductase 2.